The primary structure comprises 552 residues: DUF724 domain-containing protein 10 (552 aa).

The tract at residues 308-361 is disordered; that stretch reads SSLTQGSGDKTEVETQRKTFPKKTLPRNQNGSGNDSTLENENSNRKRKREENLC. Over residues 333–348 the composition is skewed to polar residues; sequence PRNQNGSGNDSTLENE. The DUF724 domain occupies 371 to 543; sequence ILFEKKLPVW…LEFQATASAP (173 aa).

In terms of tissue distribution, expressed at low levels in leaves, stems, flowers and siliques.

Its function is as follows. May be involved in the polar growth of plant cells via transportation of RNAs. The chain is DUF724 domain-containing protein 10 from Arabidopsis thaliana (Mouse-ear cress).